A 216-amino-acid chain; its full sequence is MOB kinase activator-like 1 homolog B (216 aa).

Residues cysteine 79, cysteine 84, histidine 161, and histidine 166 each contribute to the Zn(2+) site.

The protein belongs to the MOB1/phocein family.

This chain is MOB kinase activator-like 1 homolog B (mobB), found in Dictyostelium discoideum (Social amoeba).